Consider the following 146-residue polypeptide: MIF-like protein mif-3 (146 aa).

Belongs to the MIF family.

This chain is MIF-like protein mif-3 (mif-3), found in Caenorhabditis elegans.